The chain runs to 375 residues: Heat-inducible transcription repressor HrcA (375 aa).

The segment covering 307-318 (ATDGATHAAASS) has biased composition (low complexity). Positions 307–331 (ATDGATHAAASSQTENQSGDDTRQA) are disordered.

It belongs to the HrcA family.

Its function is as follows. Negative regulator of class I heat shock genes (grpE-dnaK-dnaJ and groELS operons). Prevents heat-shock induction of these operons. The protein is Heat-inducible transcription repressor HrcA of Bifidobacterium adolescentis (strain ATCC 15703 / DSM 20083 / NCTC 11814 / E194a).